The following is a 177-amino-acid chain: Chorismate pyruvate-lyase (177 aa).

Residues methionine 36, arginine 78, leucine 116, and glutamate 157 each coordinate substrate.

Belongs to the UbiC family. In terms of assembly, monomer.

It is found in the cytoplasm. The enzyme catalyses chorismate = 4-hydroxybenzoate + pyruvate. It participates in cofactor biosynthesis; ubiquinone biosynthesis. Its function is as follows. Removes the pyruvyl group from chorismate, with concomitant aromatization of the ring, to provide 4-hydroxybenzoate (4HB) for the ubiquinone pathway. The sequence is that of Chorismate pyruvate-lyase from Pectobacterium carotovorum subsp. carotovorum (strain PC1).